Consider the following 569-residue polypeptide: Peroxisomal targeting signal receptor (569 aa).

A Glycyl cysteine thioester (Cys-Gly) (interchain with G-Cter in ubiquitin) cross-link involves residue Cys5. The tract at residues 6-28 is amphipathic helix 1 (AH1); it reads SVGANPLAQLNKRVQQDRTLQHG. Lys17 is covalently cross-linked (Glycyl lysine isopeptide (Lys-Gly) (interchain with G-Cter in ubiquitin)). The tract at residues 53 to 71 is amphipathic helix 2 (AH2); it reads KFQMEQFMAGKASSGGNMF. Positions 112–116 match the WxxxF/Y motif 1 motif; that stretch reads WSQEF. The amphipathic helix 3 (AH3) stretch occupies residues 150 to 154; that stretch reads PMNMM. A WxxxF/Y motif 2 motif is present at residues 181–185; it reads WEQQF. Residues 229 to 245 form an amphipathic helix 4 (AH4) region; sequence FQQIWNDIHDQTDDLDS. TPR repeat units lie at residues 281-315, 316-349, 417-450, 452-484, and 486-518; these read NTDA…DPGH, VDAW…DPHN, PDVQ…RPDD, CMWN…KPTF, and RARY…HEVE.

This sequence belongs to the peroxisomal targeting signal receptor family. Interacts (via WxxxF/Y and LVxEF motifs) with PEX14; promoting translocation through the PEX13-PEX14 docking complex. In terms of processing, monoubiquitinated at Cys-5 by PEX2 during PEX5 passage through the retrotranslocation channel: monoubiquitination acts as a signal for PEX5 extraction and is required for proper export from peroxisomes and recycling. When PEX5 recycling is compromised, polyubiquitinated at Lys-17 by PEX10 during its passage through the retrotranslocation channel, leading to its degradation.

The protein localises to the cytoplasm. Its subcellular location is the cytosol. The protein resides in the peroxisome matrix. Receptor that mediates peroxisomal import of proteins containing a C-terminal PTS1-type tripeptide peroxisomal targeting signal (SKL-type). Binds to cargo proteins containing a PTS1 peroxisomal targeting signal in the cytosol, and translocates them into the peroxisome matrix by passing through the PEX13-PEX14 docking complex along with cargo proteins. PEX5 receptor is then retrotranslocated into the cytosol, leading to release of bound cargo in the peroxisome matrix, and reset for a subsequent peroxisome import cycle. The chain is Peroxisomal targeting signal receptor (PEX5) from Eremothecium gossypii (strain ATCC 10895 / CBS 109.51 / FGSC 9923 / NRRL Y-1056) (Yeast).